A 334-amino-acid polypeptide reads, in one-letter code: 5-formaminoimidazole-4-carboxamide-1-(beta)-D-ribofuranosyl 5'-monophosphate synthetase (334 aa).

4 residues coordinate 5-amino-1-(5-phospho-beta-D-ribosyl)imidazole-4-carboxamide: Ser10, His11, Ser71, and His75. The 248-residue stretch at 78-325 folds into the ATP-grasp domain; sequence IELVENMKVP…IAMEIREAIE (248 aa). ATP is bound by residues 132 to 142, 173 to 176, and Glu204; these read KPHGAKGGKGY and QEYV. Residue Asn232 participates in 5-amino-1-(5-phospho-beta-D-ribosyl)imidazole-4-carboxamide binding. Residues Glu270 and Glu283 each coordinate Mg(2+).

Belongs to the phosphohexose mutase family. In terms of assembly, homotrimer and homohexamer. Requires Mg(2+) as cofactor. The cofactor is Mn(2+).

The catalysed reaction is 5-amino-1-(5-phospho-beta-D-ribosyl)imidazole-4-carboxamide + formate + ATP = 5-formamido-1-(5-phospho-D-ribosyl)imidazole-4-carboxamide + ADP + phosphate. Its pathway is purine metabolism; IMP biosynthesis via de novo pathway; 5-formamido-1-(5-phospho-D-ribosyl)imidazole-4-carboxamide from 5-amino-1-(5-phospho-D-ribosyl)imidazole-4-carboxamide (formate route): step 1/1. Functionally, catalyzes the ATP- and formate-dependent formylation of 5-aminoimidazole-4-carboxamide-1-beta-d-ribofuranosyl 5'-monophosphate (AICAR) to 5-formaminoimidazole-4-carboxamide-1-beta-d-ribofuranosyl 5'-monophosphate (FAICAR) in the absence of folates. This Pyrococcus furiosus (strain ATCC 43587 / DSM 3638 / JCM 8422 / Vc1) protein is 5-formaminoimidazole-4-carboxamide-1-(beta)-D-ribofuranosyl 5'-monophosphate synthetase.